We begin with the raw amino-acid sequence, 232 residues long: Small ribosomal subunit protein uS2 (232 aa).

It belongs to the universal ribosomal protein uS2 family.

This chain is Small ribosomal subunit protein uS2, found in Carboxydothermus hydrogenoformans (strain ATCC BAA-161 / DSM 6008 / Z-2901).